The primary structure comprises 214 residues: Pyridoxine/pyridoxamine 5'-phosphate oxidase (214 aa).

Residues 9-12 (RREY) and Lys-67 each bind substrate. Residues 62 to 67 (RTVLLK), 77 to 78 (YS), Arg-83, Lys-84, and Gln-106 each bind FMN. 3 residues coordinate substrate: Tyr-124, Arg-128, and Ser-132. FMN contacts are provided by residues 141 to 142 (QS) and Trp-186. 192–194 (RLH) contacts substrate. Arg-196 lines the FMN pocket.

Belongs to the pyridoxamine 5'-phosphate oxidase family. Homodimer. FMN serves as cofactor.

It carries out the reaction pyridoxamine 5'-phosphate + O2 + H2O = pyridoxal 5'-phosphate + H2O2 + NH4(+). It catalyses the reaction pyridoxine 5'-phosphate + O2 = pyridoxal 5'-phosphate + H2O2. It functions in the pathway cofactor metabolism; pyridoxal 5'-phosphate salvage; pyridoxal 5'-phosphate from pyridoxamine 5'-phosphate: step 1/1. Its pathway is cofactor metabolism; pyridoxal 5'-phosphate salvage; pyridoxal 5'-phosphate from pyridoxine 5'-phosphate: step 1/1. Its function is as follows. Catalyzes the oxidation of either pyridoxine 5'-phosphate (PNP) or pyridoxamine 5'-phosphate (PMP) into pyridoxal 5'-phosphate (PLP). The sequence is that of Pyridoxine/pyridoxamine 5'-phosphate oxidase from Porphyromonas gingivalis (strain ATCC BAA-308 / W83).